The chain runs to 343 residues: Small ribosomal subunit biogenesis GTPase RsgA (343 aa).

Residues 116–275 (RGQLKPVAAN…LIDSPGIREF (160 aa)) enclose the CP-type G domain. GTP is bound by residues 163-166 (NKAD) and 217-225 (GQSGVGKSS). Zn(2+) contacts are provided by C299, C304, H306, and C312.

This sequence belongs to the TRAFAC class YlqF/YawG GTPase family. RsgA subfamily. In terms of assembly, monomer. Associates with 30S ribosomal subunit, binds 16S rRNA. The cofactor is Zn(2+).

It localises to the cytoplasm. One of several proteins that assist in the late maturation steps of the functional core of the 30S ribosomal subunit. Helps release RbfA from mature subunits. May play a role in the assembly of ribosomal proteins into the subunit. Circularly permuted GTPase that catalyzes slow GTP hydrolysis, GTPase activity is stimulated by the 30S ribosomal subunit. The chain is Small ribosomal subunit biogenesis GTPase RsgA from Pseudomonas fluorescens (strain ATCC BAA-477 / NRRL B-23932 / Pf-5).